The following is a 360-amino-acid chain: Variable large protein 14 (360 aa).

The first 18 residues, 1–18, serve as a signal peptide directing secretion; sequence MRKRISAIIMTLFMVLAS. A lipid anchor (N-palmitoyl cysteine) is attached at C19. The S-diacylglycerol cysteine moiety is linked to residue C19.

It belongs to the variable large protein (Vlp) family. Beta subfamily.

It is found in the cell outer membrane. In terms of biological role, the Vlp and Vsp proteins are antigenically distinct proteins, only one vlp or vsp gene is transcriptionally active at any one time. Switching between these genes is a mechanism of host immune response evasion. This Borrelia hermsii protein is Variable large protein 14.